Consider the following 295-residue polypeptide: Indole-3-glycerol phosphate synthase (295 aa).

This sequence belongs to the TrpC family.

It catalyses the reaction 1-(2-carboxyphenylamino)-1-deoxy-D-ribulose 5-phosphate + H(+) = (1S,2R)-1-C-(indol-3-yl)glycerol 3-phosphate + CO2 + H2O. It participates in amino-acid biosynthesis; L-tryptophan biosynthesis; L-tryptophan from chorismate: step 4/5. This Prochlorococcus marinus (strain AS9601) protein is Indole-3-glycerol phosphate synthase.